The following is a 522-amino-acid chain: DEAD-box ATP-dependent RNA helicase 1 (522 aa).

The Q motif signature appears at 30–59 (CALDTLPCLNPKLKKALENMGISSLFPVQV). In terms of domain architecture, Helicase ATP-binding spans 66 to 297 (IGPGGFERDI…QLDLHHPLFM (232 aa)). Residue 79 to 86 (SPTGSGKT) participates in ATP binding. The DEAD box signature appears at 207-210 (DETD). Positions 325–475 (YLVALLKSWE…PIPPTSLDSI (151 aa)) constitute a Helicase C-terminal domain. The segment at 490–522 (VESEAPKKGRQAFRHNSRTGNSQTKLNKPRSEA) is disordered. Residues 497–506 (KGRQAFRHNS) are compositionally biased toward basic residues.

Belongs to the DEAD box helicase family. DDX51/DBP6 subfamily.

It catalyses the reaction ATP + H2O = ADP + phosphate + H(+). This Arabidopsis thaliana (Mouse-ear cress) protein is DEAD-box ATP-dependent RNA helicase 1 (RH1).